The chain runs to 438 residues: Ribosomal protein uS12 methylthiotransferase RimO (438 aa).

One can recognise an MTTase N-terminal domain in the interval 1 to 115 (MKYFILSLGC…LDKLLADLGE (115 aa)). [4Fe-4S] cluster-binding residues include Cys10, Cys46, Cys78, Cys150, Cys154, and Cys157. Residues 136-366 (KSNEVYRYIK…MEVQQEISLN (231 aa)) form the Radical SAM core domain. The region spanning 369 to 437 (KALVGKKIPV…IYDLKGEFIN (69 aa)) is the TRAM domain.

It belongs to the methylthiotransferase family. RimO subfamily. [4Fe-4S] cluster is required as a cofactor.

Its subcellular location is the cytoplasm. The catalysed reaction is L-aspartate(89)-[ribosomal protein uS12]-hydrogen + (sulfur carrier)-SH + AH2 + 2 S-adenosyl-L-methionine = 3-methylsulfanyl-L-aspartate(89)-[ribosomal protein uS12]-hydrogen + (sulfur carrier)-H + 5'-deoxyadenosine + L-methionine + A + S-adenosyl-L-homocysteine + 2 H(+). In terms of biological role, catalyzes the methylthiolation of an aspartic acid residue of ribosomal protein uS12. This Carboxydothermus hydrogenoformans (strain ATCC BAA-161 / DSM 6008 / Z-2901) protein is Ribosomal protein uS12 methylthiotransferase RimO.